Here is a 340-residue protein sequence, read N- to C-terminus: DNA-directed RNA polymerase subunit alpha (340 aa).

An alpha N-terminal domain (alpha-NTD) region spans residues 1–233 (MYKNWRDLIR…EQLSIFINFD (233 aa)). The segment at 246–340 (DEIDKINENL…RLRGEQNEEE (95 aa)) is alpha C-terminal domain (alpha-CTD).

The protein belongs to the RNA polymerase alpha chain family. Homodimer. The RNAP catalytic core consists of 2 alpha, 1 beta, 1 beta' and 1 omega subunit. When a sigma factor is associated with the core the holoenzyme is formed, which can initiate transcription.

It carries out the reaction RNA(n) + a ribonucleoside 5'-triphosphate = RNA(n+1) + diphosphate. In terms of biological role, DNA-dependent RNA polymerase catalyzes the transcription of DNA into RNA using the four ribonucleoside triphosphates as substrates. This is DNA-directed RNA polymerase subunit alpha from Pelobacter propionicus (strain DSM 2379 / NBRC 103807 / OttBd1).